A 715-amino-acid chain; its full sequence is MKVGELNVSEKIKEILRERGIEELYPPQAEALTSGVLEGENLLVAIPTASGKTLIAEIAIANKLLEEGGKAVYIVPLKALAEEKFREFKDWERLGLKVAMATGDYDSKDEWLGKYDIIIATAEKFDSLLRHGSSWIRDVKMLVIDEIHLIGSRDRGATLEFIITQMLGRAQIIGLSATIGNPEELAEWLNAKLIRSDWRPVKLRKGVFYQGFVFWEDGGSERYNSWEELVYDAVKKGKGALVFVNMRRKAEKTALELAKKVKNYLDRKELRELRELAESLEENPTNEKLAKALLSGVAFHHAGLGRDERVLVEDNFRKGLIKVVVATPTLSAGINTPAFRVIIRDTWRYSEFGMERIPVLEVQQMMGRAGRPRYDEVGEAIIVSTTEEPSLVIDHYIKGKPEKLFSQLSNESILRSQILALIATFGYSEFKEIYDFLERTFYAHQGKDPYMLEEKIRRIIYFLLENEFIEVTLEDEIKPLPLGVRTTKLYIDPMTAKIFKDTLPRIEKNPNPLGIFHMISLAPDLTPLSYSKRETSMLEDEYYSLMDRLYFELDYENERKFFRAFKTALVLNAWINEVPEGEIVERFNVEPGDIYRIVETAEWLIYSLGEIAKVLEASQEVVDYVNTLRLRVKHGIREELIPLMELPMVGRKRARALYNAGFKDLESIRNAKPSELLRIEGIGAKIVEGIFKYLGKEVKITERPRKGTLDYFLNP.

Positions 1-29 (MKVGELNVSEKIKEILRERGIEELYPPQA) match the Q motif motif. Residues glutamine 28 and 46 to 53 (IPTASGKT) contribute to the ATP site. In terms of domain architecture, Helicase ATP-binding spans 33–197 (TSGVLEGENL…WLNAKLIRSD (165 aa)). The DEAH box motif lies at 145–148 (DEIH). Positions 226-422 (WEELVYDAVK…ILRSQILALI (197 aa)) constitute a Helicase C-terminal domain.

The protein belongs to the helicase family. Hel308 subfamily. As to quaternary structure, monomer.

The catalysed reaction is Couples ATP hydrolysis with the unwinding of duplex DNA by translocating in the 3'-5' direction.. The enzyme catalyses ATP + H2O = ADP + phosphate + H(+). DNA-dependent ATPase and 3'-5' DNA helicase that may be involved in repair of stalled replication forks. Its function is as follows. Rapidly unwinds double-stranded (ds)DNA with a 3'-overhang, has no strand reannealing capabilities. Binds single-stranded (ss)DNA, dsDNA with a 3'-overhang and ssRNA. The protein is ATP-dependent DNA helicase Hel308 of Pyrococcus abyssi (strain GE5 / Orsay).